A 542-amino-acid polypeptide reads, in one-letter code: Neutral amino acid transporter B(0) (542 aa).

An N-acetylmethionine modification is found at Met1. At 1–52 (MVADPPRGDSKGLAAAEPTANGGLALASIEDQGEAAGGCCGSRDRVRRCLRA) the chain is on the cytoplasmic side. Residues 53-82 (NLLVLLTVVAVVVGVALGLGVSGAGGALAL) form a helical membrane-spanning segment. Residues 83–95 (GPERLSAFVFPGE) lie on the Extracellular side of the membrane. A helical membrane pass occupies residues 96–117 (LLLRLLRMIILPLVVCSLIGGA). Residues 118-131 (ASLDPGALGRLGAW) lie on the Cytoplasmic side of the membrane. Residues 132-154 (ALLFFLVTTLLASALGVALALAL) traverse the membrane as a helical segment. The Extracellular segment spans residues 155-225 (QPGAASAAIN…GTRVKVPVGQ (71 aa)). Asn164 and Asn213 each carry an N-linked (GlcNAc...) asparagine glycan. The chain crosses the membrane as a helical span at residues 226 to 249 (EVEGMNILGLVVFAIVFGVALRKL). Over 250–258 (GPEGELLIR) the chain is Cytoplasmic. A helical membrane pass occupies residues 259-286 (FFNSFNEATMVLVSWIMWYAPVGIMFLV). Over 287 to 307 (AGKIVEMEDVGLLFARLGKYI) the chain is Extracellular. Residues 308 to 329 (LCCLLGHAIHGLLVLPLIYFLF) form a helical membrane-spanning segment. Over 330-334 (TRKNP) the chain is Cytoplasmic. Residues 335-365 (YRFLWGIVTPLATAFGTSSSSATLPLMMKCV) constitute an intramembrane region (discontinuously helical). Residues 366–374 (EENNGVAKH) lie on the Cytoplasmic side of the membrane. Residues 375 to 401 (ISRFILPIGATVNMDGAALFQCVAAVF) form a helical membrane-spanning segment. Residues Gly383, Thr385, and Asn387 each coordinate Na(+). At 402–414 (IAQLSEQSLDFVK) the chain is on the extracellular side. An intramembrane region (discontinuously helical) is located at residues 415–448 (IITILVTATASSVGAAGIPAGGVLTLAIILEAVN). At 449-461 (LPVDHISLILAVD) the chain is on the extracellular side. A helical transmembrane segment spans residues 462 to 483 (WLVDRSCTVLNVEGDALGAGLL). The Na(+) site is built by Asn472 and Asp476. Residues 484 to 542 (QNYVDRTEVRSTEPELIQVKSELPLDPLPAPTEEGNPLLRHYRGPAGDATVASEKESVM) are Cytoplasmic-facing. Ser494 is subject to Phosphoserine. Thr495 is subject to Phosphothreonine. Phosphoserine occurs at positions 504, 536, and 540. The tract at residues 509–542 (DPLPAPTEEGNPLLRHYRGPAGDATVASEKESVM) is disordered.

This sequence belongs to the dicarboxylate/amino acid:cation symporter (DAACS) (TC 2.A.23) family. SLC1A5 subfamily. Homotrimer.

Its subcellular location is the cell membrane. The protein resides in the melanosome. The enzyme catalyses L-glutamine(out) + L-serine(in) + Na(+)(out) = L-glutamine(in) + L-serine(out) + Na(+)(in). It carries out the reaction L-glutamine(in) + L-serine(out) + Na(+)(out) = L-glutamine(out) + L-serine(in) + Na(+)(in). The catalysed reaction is L-threonine(in) + L-glutamine(out) + Na(+)(out) = L-threonine(out) + L-glutamine(in) + Na(+)(in). It catalyses the reaction L-threonine(out) + L-glutamine(in) + Na(+)(out) = L-threonine(in) + L-glutamine(out) + Na(+)(in). The enzyme catalyses L-asparagine(in) + L-glutamine(out) + Na(+)(out) = L-asparagine(out) + L-glutamine(in) + Na(+)(in). It carries out the reaction L-asparagine(out) + L-glutamine(in) + Na(+)(out) = L-asparagine(in) + L-glutamine(out) + Na(+)(in). The catalysed reaction is L-glutamine(in) + L-alanine(out) + Na(+)(out) = L-glutamine(out) + L-alanine(in) + Na(+)(in). It catalyses the reaction L-valine(out) + L-glutamine(in) + Na(+)(out) = L-valine(in) + L-glutamine(out) + Na(+)(in). The enzyme catalyses L-glutamine(in) + L-methionine(out) + Na(+)(out) = L-glutamine(out) + L-methionine(in) + Na(+)(in). It carries out the reaction L-glutamine(in) + L-glutamate(out) + Na(+)(out) + H(+)(out) = L-glutamine(out) + L-glutamate(in) + Na(+)(in) + H(+)(in). The catalysed reaction is D-serine(in) + L-glutamine(out) + Na(+)(out) = D-serine(out) + L-glutamine(in) + Na(+)(in). It catalyses the reaction D-serine(in) + L-alanine(out) + Na(+)(out) = D-serine(out) + L-alanine(in) + Na(+)(in). The enzyme catalyses nitrate(in) = nitrate(out). It carries out the reaction iodide(out) = iodide(in). The catalysed reaction is thiocyanate(in) = thiocyanate(out). Sodium-coupled antiporter of neutral amino acids. In a tri-substrate transport cycle, exchanges neutral amino acids between the extracellular and intracellular compartments, coupled to the inward cotransport of at least one sodium ion. The preferred substrate is the essential amino acid L-glutamine, a precursor for biosynthesis of proteins, nucleotides and amine sugars as well as an alternative fuel for mitochondrial oxidative phosphorylation. Exchanges L-glutamine with other neutral amino acids such as L-serine, L-threonine and L-asparagine in a bidirectional way. Provides L-glutamine to proliferating stem and activated cells driving the metabolic switch toward cell differentiation. The transport cycle is usually pH-independent, with the exception of L-glutamate. Transports extracellular L-glutamate coupled to the cotransport of one proton and one sodium ion in exchange for intracellular L-glutamine counter-ion. May provide for L-glutamate uptake in glial cells regulating glutamine/glutamate cycle in the nervous system. Can transport D-amino acids. Mediates D-serine release from the retinal glia potentially affecting NMDA receptor function in retinal neurons. Displays sodium- and amino acid-dependent but uncoupled channel-like anion conductance with a preference SCN(-) &gt;&gt; NO3(-) &gt; I(-) &gt; Cl(-). Through binding of the fusogenic protein syncytin-1/ERVW-1 may mediate trophoblasts syncytialization, the spontaneous fusion of their plasma membranes, an essential process in placental development. The protein is Neutral amino acid transporter B(0) (SLC1A5) of Macaca fascicularis (Crab-eating macaque).